The chain runs to 236 residues: Peroxisomal membrane protein PMP27 (236 aa).

The protein belongs to the peroxin-11 family. Homooligomer. Interacts with PEX34.

The protein localises to the peroxisome membrane. Involved in peroxisomal proliferation. Promotes peroxisome division and biogenesis. The sequence is that of Peroxisomal membrane protein PMP27 (PEX11) from Saccharomyces cerevisiae (strain ATCC 204508 / S288c) (Baker's yeast).